Reading from the N-terminus, the 334-residue chain is Fructose-1,6-bisphosphatase class 1 (334 aa).

Glu92, Asp114, Leu116, and Asp117 together coordinate Mg(2+). Residues 117 to 120 (DGSS) and Asn209 each bind substrate. A Mg(2+)-binding site is contributed by Glu281.

This sequence belongs to the FBPase class 1 family. In terms of assembly, homotetramer. Mg(2+) serves as cofactor.

It is found in the cytoplasm. The enzyme catalyses beta-D-fructose 1,6-bisphosphate + H2O = beta-D-fructose 6-phosphate + phosphate. The protein operates within carbohydrate biosynthesis; gluconeogenesis. The polypeptide is Fructose-1,6-bisphosphatase class 1 (Nitrosomonas europaea (strain ATCC 19718 / CIP 103999 / KCTC 2705 / NBRC 14298)).